A 127-amino-acid polypeptide reads, in one-letter code: Small ribosomal subunit protein uS11 (127 aa).

Belongs to the universal ribosomal protein uS11 family. Part of the 30S ribosomal subunit. Interacts with proteins S7 and S18. Binds to IF-3.

In terms of biological role, located on the platform of the 30S subunit, it bridges several disparate RNA helices of the 16S rRNA. Forms part of the Shine-Dalgarno cleft in the 70S ribosome. This chain is Small ribosomal subunit protein uS11, found in Rickettsia bellii (strain RML369-C).